Reading from the N-terminus, the 400-residue chain is Nicotinate phosphoribosyltransferase (400 aa).

His220 carries the phosphohistidine; by autocatalysis modification.

Belongs to the NAPRTase family. In terms of processing, transiently phosphorylated on a His residue during the reaction cycle. Phosphorylation strongly increases the affinity for substrates and increases the rate of nicotinate D-ribonucleotide production. Dephosphorylation regenerates the low-affinity form of the enzyme, leading to product release.

It carries out the reaction nicotinate + 5-phospho-alpha-D-ribose 1-diphosphate + ATP + H2O = nicotinate beta-D-ribonucleotide + ADP + phosphate + diphosphate. Its pathway is cofactor biosynthesis; NAD(+) biosynthesis; nicotinate D-ribonucleotide from nicotinate: step 1/1. In terms of biological role, catalyzes the synthesis of beta-nicotinate D-ribonucleotide from nicotinate and 5-phospho-D-ribose 1-phosphate at the expense of ATP. In Salmonella choleraesuis (strain SC-B67), this protein is Nicotinate phosphoribosyltransferase.